The primary structure comprises 612 residues: MFS siderochrome iron transporter B (612 aa).

The Cytoplasmic segment spans residues 1–86 (MLHVLSVGPS…GAQAGVKKIE (86 aa)). A disordered region spans residues 55–78 (DKEAAHAPANAETNNEEANPSDGA). Residues 60 to 72 (HAPANAETNNEEA) are compositionally biased toward low complexity. A helical membrane pass occupies residues 87 to 104 (AVTLSWTRGTAIWFLTLV). Topologically, residues 105–127 (NDFRLSMYTSLNAYATSSFLGHS) are extracellular. A helical transmembrane segment spans residues 128–148 (LLTVINIVSYVMGGSVYIPMA). Residues 149–156 (KALDLWGR) are Cytoplasmic-facing. A helical transmembrane segment spans residues 157 to 177 (AEGFLLMTFFCILGLILLASS). At 178 to 187 (QNLPTYCAGQ) the chain is on the extracellular side. The chain crosses the membrane as a helical span at residues 188–208 (VFYKVGFGGLSYTWNVLAADV). The Cytoplasmic portion of the chain corresponds to 209–215 (TNLRNRG). A helical membrane pass occupies residues 216–236 (LAFAFTSSPALISAFAGSKAA). Residues 237–246 (SDLLAHSTWR) lie on the Extracellular side of the membrane. Residues 247–267 (WGFGMWAIILPVVALPIYGLL) form a helical membrane-spanning segment. Over 268 to 302 (AYHLRQAEKKGVLVKETRDWSITPKTVWWAIMEFD) the chain is Cytoplasmic. Residues 303–323 (LPGVLLFAGGFVIFLLPFTLA) traverse the membrane as a helical segment. The Extracellular segment spans residues 324–334 (ATAPHGYQTDY). Residues 335–355 (IIAMITLGLALIIAFGFYEML) form a helical membrane-spanning segment. Residues 356 to 370 (VAPVPFLNYKFLIDR) lie on the Cytoplasmic side of the membrane. Residues 371–393 (TVLGACLLDMTYQVSYYCYASYL) form a helical membrane-spanning segment. Over 394 to 409 (PSFLQVVYELDVATAG) the chain is Extracellular. Residues 410 to 430 (YVTNTFSVVSFVFLFFAGWLI) form a helical membrane-spanning segment. Residues 431-435 (RWTGR) lie on the Cytoplasmic side of the membrane. The chain crosses the membrane as a helical span at residues 436 to 456 (FKWILWVCVPLYIFGLGLMIH). Residues 457-463 (FRQPGGY) are Extracellular-facing. A helical transmembrane segment spans residues 464-484 (IGYIVMCEIFFSVAGSVFILC). Residues 485-498 (VQLAVLASVDHQHV) lie on the Cytoplasmic side of the membrane. A helical membrane pass occupies residues 499 to 519 (AAVLALLFVMGSIGGSIGSAI). Topologically, residues 520 to 575 (CGAIWTSTFLSRLERNLPASAMPDLSLIYSSLPTQLSYPVGSATRTAIVEAYGYAQ) are extracellular. A helical membrane pass occupies residues 576-596 (ARMLIAGTAFMVLGFIWVGMM). Residues 597–612 (RNLNVKNMTQTKGNVV) are Cytoplasmic-facing.

It belongs to the major facilitator superfamily.

It is found in the cell tip. It localises to the cytoplasmic vesicle membrane. Its subcellular location is the cell membrane. Its function is as follows. Major facilitator transporter involved in triacetylfusarinine C (TAFC) uptake. Can also transport ferricrocin and coprogen, but not ferrichrysin. MirB plays a crucial role for virulence in a murine model of pulmonary aspergillosis, indicating that TAFC-mediated iron uptake plays a dominant role during infection. The chain is MFS siderochrome iron transporter B from Aspergillus fumigatus (strain ATCC MYA-4609 / CBS 101355 / FGSC A1100 / Af293) (Neosartorya fumigata).